A 370-amino-acid polypeptide reads, in one-letter code: Spermidine/putrescine import ATP-binding protein PotA (370 aa).

The region spanning 11-241 (IELRSITKSY…PKNLFVAKFI (231 aa)) is the ABC transporter domain. 43–50 (GPSGCGKT) is a binding site for ATP.

It belongs to the ABC transporter superfamily. Spermidine/putrescine importer (TC 3.A.1.11.1) family. As to quaternary structure, the complex is composed of two ATP-binding proteins (PotA), two transmembrane proteins (PotB and PotC) and a solute-binding protein (PotD).

It is found in the cell inner membrane. The catalysed reaction is ATP + H2O + polyamine-[polyamine-binding protein]Side 1 = ADP + phosphate + polyamineSide 2 + [polyamine-binding protein]Side 1.. Its function is as follows. Part of the ABC transporter complex PotABCD involved in spermidine/putrescine import. Responsible for energy coupling to the transport system. The polypeptide is Spermidine/putrescine import ATP-binding protein PotA (Pasteurella multocida (strain Pm70)).